The following is a 73-amino-acid chain: Gastricsin (73 aa).

Positions 1-43 (SVIKVPLKKLKSIRQAMKEKGLLEEFLKTHKYDPAQRYRIGDI) are cleaved as a propeptide — activation peptide. The region spanning 57 to 73 (YFGEISIGTPPQNFLVL) is the Peptidase A1 domain.

It belongs to the peptidase A1 family.

Its subcellular location is the secreted. It catalyses the reaction More restricted specificity than pepsin A, but shows preferential cleavage at Tyr-|-Xaa bonds. High activity on hemoglobin.. Hydrolyzes a variety of proteins. This is Gastricsin (PGC) from Sus scrofa (Pig).